We begin with the raw amino-acid sequence, 283 residues long: Tetraspanin-33 (283 aa).

Residues 1 to 24 are Cytoplasmic-facing; it reads MARRPRAPAASGEEFSFVSPLVKY. Residues 25–45 form a helical membrane-spanning segment; it reads LLFFFNMLFWVISMVMVAVGV. Topologically, residues 46–64 are extracellular; that stretch reads YARLMKHAEAALACLAVDP. Residues 65–85 traverse the membrane as a helical segment; it reads AILLIVVGVLMFLLTFCGCIG. Residues 86 to 96 lie on the Cytoplasmic side of the membrane; sequence SLRENICLLQT. Residues 97 to 117 form a helical membrane-spanning segment; it reads FSLCLTAVFLLQLAAGILGFV. Residues 118–235 lie on the Extracellular side of the membrane; it reads FSDKARGKVS…DKLVNWIHSN (118 aa). 4 disulfides stabilise this stretch: C156–C224, C157–C189, C173–C183, and C190–C203. Residue N172 is glycosylated (N-linked (GlcNAc...) asparagine). A helical membrane pass occupies residues 236-256; that stretch reads LFLLGGVALGLAIPQLVGILL. Over 257–283 the chain is Cytoplasmic; it reads SQILVNQIKDQIKLQLYNQQHRADPWY.

This sequence belongs to the tetraspanin (TM4SF) family. In terms of assembly, homodimer; disulfide-linked. Interacts (via extracellular domain) with ADAM10 (via extracellular domain). Interacts (via cytoplasmic domain) with PLEKHA7 (via WW domains); the interaction is dependent on PDZD11 being bound to PLEKHA7 and facilitates the docking of ADAM10 to zonula adherens. Predominantly expressed in erythroblasts.

Its subcellular location is the cell membrane. It localises to the cell junction. The protein localises to the adherens junction. It is found in the cytoplasm. Part of TspanC8 subgroup, composed of 6 members that interact with the transmembrane metalloprotease ADAM10. This interaction is required for ADAM10 exit from the endoplasmic reticulum and for enzymatic maturation and trafficking to the cell surface as well as substrate specificity. Different TspanC8/ADAM10 complexes have distinct substrates. Plays an important role in normal erythropoiesis. It has a role in the differentiation of erythroid progenitors. Negatively regulates ligand-induced Notch activity probably by regulating ADAM10 activity. Mediates docking of ADAM10 to zonula adherens by interacting with ADAM10 and, in a PDZD11-dependent manner, with the zonula adherens protein PLEKHA7. The sequence is that of Tetraspanin-33 from Homo sapiens (Human).